The following is a 145-amino-acid chain: MSTEGGGRRCQAQVSRRISFSASHRLYSKFLSDEENLKLFGKCNNPNGHGHNYKVVVTVHGEIDPATGMVMNLADLKKYMEEAIMQPLDHKNLDMDVPYFADVVSTTENVAVYIWDNLQKVLPVGVLYKVKVYETDNNIVVYKGE.

Serine 19 is modified (phosphoserine; by PKG). Zn(2+) is bound at residue histidine 24. Position 28 is a phosphoserine (serine 28). Cysteine 43 serves as the catalytic Proton acceptor. Residues histidine 49 and histidine 51 each coordinate Zn(2+). Catalysis depends on histidine 90, which acts as the Charge relay system. A Phosphotyrosine modification is found at tyrosine 128. Glutamate 134 acts as the Charge relay system in catalysis.

It belongs to the PTPS family. Homohexamer formed of two homotrimers in a head to head fashion. The cofactor is Zn(2+). Post-translationally, phosphorylation of Ser-19 is required for maximal enzyme activity.

The enzyme catalyses 7,8-dihydroneopterin 3'-triphosphate = 6-pyruvoyl-5,6,7,8-tetrahydropterin + triphosphate + H(+). It functions in the pathway cofactor biosynthesis; tetrahydrobiopterin biosynthesis; tetrahydrobiopterin from 7,8-dihydroneopterin triphosphate: step 1/3. Involved in the biosynthesis of tetrahydrobiopterin, an essential cofactor of aromatic amino acid hydroxylases. Catalyzes the transformation of 7,8-dihydroneopterin triphosphate into 6-pyruvoyl tetrahydropterin. The sequence is that of 6-pyruvoyl tetrahydrobiopterin synthase (PTS) from Homo sapiens (Human).